We begin with the raw amino-acid sequence, 248 residues long: MKSILNDFLLMIQFFTRIPVNKNLQCEKENFKRGAFFLPVVAFIIGGMEFLIYLGLKNFLPANVIIVLLILFTAMITGGLHMDGLADTCDGFFSLRDKERIIEIMKDSRIGSYGTIALIIDLLLKYQLLYSLVLKGYSIAIVLAPIIGRISILFLCLSKRTAKKNGSGNIFIGNMSKPIIFFITTIVLVLSTYFLGLRATIIPFIGVLLITYLLYLLCLNKINGLTGDTLGACNELGEITFLLILLMM.

The next 6 helical transmembrane spans lie at 36–56, 59–79, 114–134, 137–157, 170–190, and 199–219; these read FFLPVVAFIIGGMEFLIYLGL, FLPANVIIVLLILFTAMITGG, GTIALIIDLLLKYQLLYSLVL, YSIAIVLAPIIGRISILFLCL, IFIGNMSKPIIFFITTIVLVL, and ATIIPFIGVLLITYLLYLLCL.

Belongs to the CobS family. Requires Mg(2+) as cofactor.

The protein resides in the cell membrane. The catalysed reaction is alpha-ribazole + adenosylcob(III)inamide-GDP = adenosylcob(III)alamin + GMP + H(+). It carries out the reaction alpha-ribazole 5'-phosphate + adenosylcob(III)inamide-GDP = adenosylcob(III)alamin 5'-phosphate + GMP + H(+). Its pathway is cofactor biosynthesis; adenosylcobalamin biosynthesis; adenosylcobalamin from cob(II)yrinate a,c-diamide: step 7/7. Its function is as follows. Joins adenosylcobinamide-GDP and alpha-ribazole to generate adenosylcobalamin (Ado-cobalamin). Also synthesizes adenosylcobalamin 5'-phosphate from adenosylcobinamide-GDP and alpha-ribazole 5'-phosphate. This Clostridium botulinum (strain Langeland / NCTC 10281 / Type F) protein is Adenosylcobinamide-GDP ribazoletransferase.